A 316-amino-acid chain; its full sequence is NAD kinase 1 (316 aa).

Residue D67 is the Proton acceptor of the active site. 67–68 (DG) is an NAD(+) binding site. The tract at residues 132–151 (RSAEERADAPTPLQQPDVED) is disordered. Residues 160-161 (ND), R190, and D192 each bind NAD(+).

This sequence belongs to the NAD kinase family. A divalent metal cation serves as cofactor.

It localises to the cytoplasm. The enzyme catalyses NAD(+) + ATP = ADP + NADP(+) + H(+). Its function is as follows. Involved in the regulation of the intracellular balance of NAD and NADP, and is a key enzyme in the biosynthesis of NADP. Catalyzes specifically the phosphorylation on 2'-hydroxyl of the adenosine moiety of NAD to yield NADP. The sequence is that of NAD kinase 1 from Parasynechococcus marenigrum (strain WH8102).